Here is a 142-residue protein sequence, read N- to C-terminus: Large ribosomal subunit protein uL11 (142 aa).

It belongs to the universal ribosomal protein uL11 family. In terms of assembly, part of the ribosomal stalk of the 50S ribosomal subunit. Interacts with L10 and the large rRNA to form the base of the stalk. L10 forms an elongated spine to which L12 dimers bind in a sequential fashion forming a multimeric L10(L12)X complex. One or more lysine residues are methylated.

Forms part of the ribosomal stalk which helps the ribosome interact with GTP-bound translation factors. The polypeptide is Large ribosomal subunit protein uL11 (Shewanella sp. (strain W3-18-1)).